Reading from the N-terminus, the 259-residue chain is Early E4 30 kDa protein (259 aa).

This sequence belongs to the adenoviridae E4 30 to 34 kDa protein family. In terms of assembly, interacts with E1B-55k.

Its subcellular location is the host nucleus. It is found in the host cytoplasm. Plays a major role to prevent cellular inhibition of viral genome replication by nuclear bodies. Assembles an SCF-like E3 ubiquitin ligase complex based on the cellular proteins ELOB, ELOC, CUL5 and RBX1, in cooperation with viral E1B-55K. This viral RING-type ligase ubiquitinates cellular substrates prior to proteasomal degradation: p53/TP53, LIG4, MRE11-RAD50-NBS1 (MRN) complex, ITGA3, DAXX and BLM. This is Early E4 30 kDa protein from Canine adenovirus serotype 2 (strain Toronto A 26-61) (CAdV-2).